The chain runs to 454 residues: Bifunctional protein GlmU (454 aa).

The segment at 1 to 232 (MTDRTCLSIV…VDNVIGINNR (232 aa)) is pyrophosphorylase. UDP-N-acetyl-alpha-D-glucosamine-binding positions include 11–14 (LAAG), Lys-25, Gln-78, and 83–84 (GT). Mg(2+) is bound at residue Asp-108. Gly-144, Glu-158, Asn-173, and Asn-230 together coordinate UDP-N-acetyl-alpha-D-glucosamine. Position 230 (Asn-230) interacts with Mg(2+). The linker stretch occupies residues 233–253 (AELAEAETIWQNRKRRELMLS). Positions 254 to 454 (GVTLIAPETV…AIKAAKSVSK (201 aa)) are N-acetyltransferase. Residues Arg-319 and Lys-337 each contribute to the UDP-N-acetyl-alpha-D-glucosamine site. His-349 (proton acceptor) is an active-site residue. The UDP-N-acetyl-alpha-D-glucosamine site is built by Tyr-352 and Asn-363. Acetyl-CoA is bound by residues Ala-366, 372-373 (NY), Ser-391, Ser-409, and Arg-426.

The protein in the N-terminal section; belongs to the N-acetylglucosamine-1-phosphate uridyltransferase family. In the C-terminal section; belongs to the transferase hexapeptide repeat family. Homotrimer. It depends on Mg(2+) as a cofactor.

The protein localises to the cytoplasm. It catalyses the reaction alpha-D-glucosamine 1-phosphate + acetyl-CoA = N-acetyl-alpha-D-glucosamine 1-phosphate + CoA + H(+). The catalysed reaction is N-acetyl-alpha-D-glucosamine 1-phosphate + UTP + H(+) = UDP-N-acetyl-alpha-D-glucosamine + diphosphate. Its pathway is nucleotide-sugar biosynthesis; UDP-N-acetyl-alpha-D-glucosamine biosynthesis; N-acetyl-alpha-D-glucosamine 1-phosphate from alpha-D-glucosamine 6-phosphate (route II): step 2/2. The protein operates within nucleotide-sugar biosynthesis; UDP-N-acetyl-alpha-D-glucosamine biosynthesis; UDP-N-acetyl-alpha-D-glucosamine from N-acetyl-alpha-D-glucosamine 1-phosphate: step 1/1. It functions in the pathway bacterial outer membrane biogenesis; LPS lipid A biosynthesis. Functionally, catalyzes the last two sequential reactions in the de novo biosynthetic pathway for UDP-N-acetylglucosamine (UDP-GlcNAc). The C-terminal domain catalyzes the transfer of acetyl group from acetyl coenzyme A to glucosamine-1-phosphate (GlcN-1-P) to produce N-acetylglucosamine-1-phosphate (GlcNAc-1-P), which is converted into UDP-GlcNAc by the transfer of uridine 5-monophosphate (from uridine 5-triphosphate), a reaction catalyzed by the N-terminal domain. The polypeptide is Bifunctional protein GlmU (Brucella abortus (strain S19)).